A 381-amino-acid chain; its full sequence is Homoserine O-succinyltransferase (381 aa).

Residues 53–361 (ILICHALSGS…DSVHGHDAFL (309 aa)) enclose the AB hydrolase-1 domain. Ser-157 acts as the Nucleophile in catalysis. Position 227 (Arg-227) interacts with substrate. Active-site residues include Asp-324 and His-357. Position 358 (Asp-358) interacts with substrate.

The protein belongs to the AB hydrolase superfamily. MetX family. Homodimer.

The protein resides in the cytoplasm. The catalysed reaction is L-homoserine + succinyl-CoA = O-succinyl-L-homoserine + CoA. It participates in amino-acid biosynthesis; L-methionine biosynthesis via de novo pathway; O-succinyl-L-homoserine from L-homoserine: step 1/1. Functionally, transfers a succinyl group from succinyl-CoA to L-homoserine, forming succinyl-L-homoserine. This Saccharophagus degradans (strain 2-40 / ATCC 43961 / DSM 17024) protein is Homoserine O-succinyltransferase.